The sequence spans 307 residues: Ribonuclease HII (307 aa).

In terms of domain architecture, RNase H type-2 spans 44 to 235; sequence EPVAGVDEAG…VRRAGGRMEL (192 aa). Positions 50, 51, and 144 each coordinate a divalent metal cation. A disordered region spans residues 241–307; sequence ADSDDSPGFA…SRPAELLEIP (67 aa). Residues 250–280 are compositionally biased toward low complexity; it reads ASGPAEAVPGPAGSAGAASAAARPAAAGPAG. The span at 287 to 296 shows a compositional bias: basic and acidic residues; the sequence is RAADLRDNGD.

This sequence belongs to the RNase HII family. Mn(2+) serves as cofactor. It depends on Mg(2+) as a cofactor.

It localises to the cytoplasm. It carries out the reaction Endonucleolytic cleavage to 5'-phosphomonoester.. Endonuclease that specifically degrades the RNA of RNA-DNA hybrids. The sequence is that of Ribonuclease HII from Acidothermus cellulolyticus (strain ATCC 43068 / DSM 8971 / 11B).